Reading from the N-terminus, the 557-residue chain is MASKQAAAKGKGEKRKRVVLTLKEKIDICTRLERGESRKALMQEYNVGMSTLYDIKAHKAQLLRFFASSDSRQALEQRRTLHTPKLEHLDRVLYEWFLVKRAEGIPVSGPMLIEKAKDFYKQMRLTEPCVFSGGWLWRFKARHGIKKLDASSEKQAADHQAAEQFCGFFRSLAAEHGLSPEQVYSADETGLVWRCLPNSAPDDGTVPHFKQGKDRLTVLMCANATGSHRIKPLAIGKGGGPRAFRGIQHLPIAYKAQGNAWVDKEIFSDWFHHIFVPSVREHFRTIGLPEDSKAILLLDHSRAHSQESELVSENVFTIFLPSSVTSLLQPTEQGIRRAFMRLFINPPVAFQGFPTRHNINDAIVNVARAWNAVPSQVFQRAWRKLWPTVTFTEGSSSEEEAECCAIKPHKTFAHILGLVKEGPTCSGSRLQDSRVEERVVAGRDIDEAPAIVAPSQATRCTKKSEKDTGETEEAAWEQAATSFEALVRFAERQPCFSVQEMGQLQALHTVFRRQQQLRQPRVALRAVIKLEALQEHPGVCVATTHPTLPCSSTAGDN.

The 52-residue stretch at 11–62 folds into the HTH psq-type domain; it reads KGEKRKRVVLTLKEKIDICTRLERGESRKALMQEYNVGMSTLYDIKAHKAQL. DNA-binding regions (H-T-H motif) lie at residues 38-58 and 110-142; these read RKALMQEYNVGMSTLYDIKAH and PMLIEKAKDFYKQMRLTEPCVFSGGWLWRFKAR. The HTH CENPB-type domain maps to 77–149; it reads QRRTLHTPKL…KARHGIKKLD (73 aa). A DDE-1 domain is found at 213-382; it reads KDRLTVLMCA…VPSQVFQRAW (170 aa).

Belongs to the tigger transposable element derived protein family. Brain; highest in the temporal and brainstem regions.

It localises to the nucleus. Functionally, may bind DNA. This is Jerky protein from Mus musculus (Mouse).